The sequence spans 918 residues: DNA ligase 1 (918 aa).

A compositionally biased stretch (polar residues) spans 1 to 15 (MQRSIMSFFQPTTTE). A disordered region spans residues 1-271 (MQRSIMSFFQ…DPTNYNPSKS (271 aa)). Residues 16 to 54 (GKAKKPEKEIPSSIREKEPPPKVALKERNRAVPESDSPV) show a composition bias toward basic and acidic residues. Phosphoserine occurs at positions 50, 52, 66, and 67. Thr-78 is subject to Phosphothreonine. Residues 81–92 (VQKPVSDSKQSS) show a composition bias toward low complexity. Residues 100-114 (PENSPVFNCSPSMDI) are compositionally biased toward polar residues. Over residues 120–130 (PKRRTARKQLP) the composition is skewed to basic residues. Lys-145 is modified (N6-acetyllysine). Residue Thr-195 is modified to Phosphothreonine. An N6-acetyllysine modification is found at Lys-227. Residues Ser-230 and Ser-231 each carry the phosphoserine modification. Phosphothreonine is present on Thr-234. The span at 240-259 (VKTEVKQEESDTPRKEETKG) shows a compositional bias: basic and acidic residues. Residue Glu-566 participates in ATP binding. Catalysis depends on Lys-568, which acts as the N6-AMP-lysine intermediate. ATP-binding residues include Arg-573 and Glu-621. A Mg(2+)-binding site is contributed by Glu-621. The interaction with target DNA stretch occupies residues 642–644 (KRK). Position 720 (Glu-720) interacts with Mg(2+). ATP is bound by residues Lys-725 and Lys-744. Phosphothreonine is present on Thr-798. Ser-801, Ser-908, Ser-909, and Ser-913 each carry phosphoserine. Positions 881-918 (DKQPEQATTSDQVASLYRKQSQIQNQQSSDLDSDVEDY) are disordered. Polar residues predominate over residues 885–910 (EQATTSDQVASLYRKQSQIQNQQSSD).

Belongs to the ATP-dependent DNA ligase family. As to quaternary structure, interacts with PCNA. Interacts with POLB. Mg(2+) serves as cofactor.

It localises to the nucleus. The enzyme catalyses ATP + (deoxyribonucleotide)n-3'-hydroxyl + 5'-phospho-(deoxyribonucleotide)m = (deoxyribonucleotide)n+m + AMP + diphosphate.. Functionally, DNA ligase that seals nicks in double-stranded during DNA repair. Also involved in DNA replication and DNA recombination. This is DNA ligase 1 (Lig1) from Rattus norvegicus (Rat).